The sequence spans 521 residues: 2-isopropylmalate synthase (521 aa).

Residues valine 12–threonine 274 form the Pyruvate carboxyltransferase domain. Residues aspartate 21, histidine 209, histidine 211, and asparagine 245 each coordinate Mn(2+). Residues lysine 398 to serine 521 form a regulatory domain region.

This sequence belongs to the alpha-IPM synthase/homocitrate synthase family. LeuA type 1 subfamily. In terms of assembly, homodimer. It depends on Mn(2+) as a cofactor.

The protein localises to the cytoplasm. It carries out the reaction 3-methyl-2-oxobutanoate + acetyl-CoA + H2O = (2S)-2-isopropylmalate + CoA + H(+). Its pathway is amino-acid biosynthesis; L-leucine biosynthesis; L-leucine from 3-methyl-2-oxobutanoate: step 1/4. Its function is as follows. Catalyzes the condensation of the acetyl group of acetyl-CoA with 3-methyl-2-oxobutanoate (2-ketoisovalerate) to form 3-carboxy-3-hydroxy-4-methylpentanoate (2-isopropylmalate). In Rhodopseudomonas palustris (strain BisA53), this protein is 2-isopropylmalate synthase.